A 566-amino-acid polypeptide reads, in one-letter code: Bifunctional NADP phosphatase/NAD kinase (566 aa).

Residues 1 to 283 form an NADP phosphatase region; the sequence is MDMLEMALNI…KLVGIFGNRW (283 aa). The Mg(2+) site is built by Glu66, Asp85, Val87, Asp88, and Asp229. The tract at residues 275–566 is NAD kinase; the sequence is LVGIFGNRWR…YNKLKKLSLM (292 aa). The active-site Proton acceptor is Asp355. Residues 355–356, Arg360, 430–431, Lys441, Arg458, Asp460, 471–476, and Asn528 each bind NAD(+); these read DG, NE, and TAYSLS.

In the N-terminal section; belongs to the inositol monophosphatase superfamily. This sequence in the C-terminal section; belongs to the NAD kinase family. Homotetramer. The cofactor is Mg(2+).

The protein resides in the cytoplasm. It carries out the reaction NAD(+) + ATP = ADP + NADP(+) + H(+). The enzyme catalyses NADP(+) + H2O = phosphate + NAD(+). In terms of biological role, involved in the regulation of the intracellular balance between NAD(H) and NADP(H), and is a key enzyme in the biosynthesis of NADP. Catalyzes the phosphorylation and dephosphorylation of NAD and NADP, respectively. Although it shows conflicting dual activities and is able to supply NADP, it seems that its physiological role is to prevent excess accumulation of NADP. This Methanococcus maripaludis (strain DSM 14266 / JCM 13030 / NBRC 101832 / S2 / LL) protein is Bifunctional NADP phosphatase/NAD kinase.